Reading from the N-terminus, the 479-residue chain is Zinc metalloproteinase/disintegrin PMMP-1 (479 aa).

Residues 1–20 form the signal peptide; sequence MIQVLLVTICLAVFPYQGSS. Positions 21–188 are excised as a propeptide; the sequence is IILESGNVND…PIKKASKLVV (168 aa). Residues 194–390 form the Peptidase M12B domain; it reads RYVELVIVAD…HNPQCILNKP (197 aa). Cystine bridges form between cysteine 305–cysteine 385, cysteine 345–cysteine 369, and cysteine 347–cysteine 352. Histidine 330 serves as a coordination point for Zn(2+). Glutamate 331 is a catalytic residue. Positions 334 and 339 each coordinate Zn(2+). Asparagine 368 carries an N-linked (GlcNAc...) asparagine glycan. The propeptide occupies 391 to 408; it reads LRTDTVSTPVSGNELLEA. The region spanning 398–479 is the Disintegrin domain; that stretch reads TPVSGNELLE…ADCPRNGLYG (82 aa). 6 cysteine pairs are disulfide-bonded: cysteine 412–cysteine 427, cysteine 414–cysteine 422, cysteine 421–cysteine 444, cysteine 435–cysteine 441, cysteine 440–cysteine 465, and cysteine 453–cysteine 472. Residues 457–459 carry the Cell attachment site motif; it reads RGD.

This sequence belongs to the venom metalloproteinase (M12B) family. P-II subfamily. P-IIa sub-subfamily. As to quaternary structure, monomer. It depends on Zn(2+) as a cofactor. Expressed by the venom gland.

Its subcellular location is the secreted. Its function is as follows. Impairs hemostasis in the envenomed animal. In terms of biological role, inhibits platelet aggregation. This Protobothrops mucrosquamatus (Taiwan habu) protein is Zinc metalloproteinase/disintegrin PMMP-1.